Reading from the N-terminus, the 320-residue chain is Protein EI24 homolog (320 aa).

The next 3 membrane-spanning stretches (helical) occupy residues 41–61 (QCFL…KWFI), 94–114 (GLLQ…SFIL), and 175–195 (ILLL…PYIG). An N-linked (GlcNAc...) asparagine glycan is attached at Asn217. 3 helical membrane-spanning segments follow: residues 227-247 (LDFF…CVLA), 248-268 (IFFL…PLFV), and 292-312 (LGKL…LSIF).

This sequence belongs to the EI24 (TC 9.B.7) family.

It is found in the membrane. This chain is Protein EI24 homolog, found in Arabidopsis thaliana (Mouse-ear cress).